The chain runs to 322 residues: ATP-dependent 6-phosphofructokinase (322 aa).

Gly-11 is a binding site for ATP. 21–25 is a binding site for ADP; that stretch reads RAVVR. ATP is bound by residues 72–73 and 102–105; these read RC and GDGS. Asp-103 contributes to the Mg(2+) binding site. 127–129 is a substrate binding site; it reads TID. The Proton acceptor role is filled by Asp-129. Residue Arg-156 coordinates ADP. Substrate is bound by residues Arg-164 and 171–173; that span reads MGR. ADP is bound by residues 187-189, Arg-213, and 215-217; these read GAE and KKH. Residues Glu-224, Arg-245, and 251–254 each bind substrate; that span reads HVQR.

It belongs to the phosphofructokinase type A (PFKA) family. ATP-dependent PFK group I subfamily. Prokaryotic clade 'B1' sub-subfamily. As to quaternary structure, homotetramer. The cofactor is Mg(2+).

It is found in the cytoplasm. It carries out the reaction beta-D-fructose 6-phosphate + ATP = beta-D-fructose 1,6-bisphosphate + ADP + H(+). Its pathway is carbohydrate degradation; glycolysis; D-glyceraldehyde 3-phosphate and glycerone phosphate from D-glucose: step 3/4. With respect to regulation, allosterically activated by ADP and other diphosphonucleosides, and allosterically inhibited by phosphoenolpyruvate. Catalyzes the phosphorylation of D-fructose 6-phosphate to fructose 1,6-bisphosphate by ATP, the first committing step of glycolysis. This chain is ATP-dependent 6-phosphofructokinase, found in Staphylococcus aureus (strain MRSA252).